The primary structure comprises 280 residues: Putative pyruvate, phosphate dikinase regulatory protein 1 (280 aa).

152-159 contributes to the ADP binding site; sequence GVSRTSKT.

Belongs to the pyruvate, phosphate/water dikinase regulatory protein family. PDRP subfamily.

It catalyses the reaction N(tele)-phospho-L-histidyl/L-threonyl-[pyruvate, phosphate dikinase] + ADP = N(tele)-phospho-L-histidyl/O-phospho-L-threonyl-[pyruvate, phosphate dikinase] + AMP + H(+). The catalysed reaction is N(tele)-phospho-L-histidyl/O-phospho-L-threonyl-[pyruvate, phosphate dikinase] + phosphate + H(+) = N(tele)-phospho-L-histidyl/L-threonyl-[pyruvate, phosphate dikinase] + diphosphate. Functionally, bifunctional serine/threonine kinase and phosphorylase involved in the regulation of the pyruvate, phosphate dikinase (PPDK) by catalyzing its phosphorylation/dephosphorylation. The protein is Putative pyruvate, phosphate dikinase regulatory protein 1 of Latilactobacillus sakei subsp. sakei (strain 23K) (Lactobacillus sakei subsp. sakei).